Reading from the N-terminus, the 480-residue chain is MGQEGMGYNNGKGGGGGGGGLPMTAPRPRGASPLSSHGHHHRSRKIHRTFNNVKITVLCGLVTILVLRGTIGLNLSLPNQPTDADALAGAKAVEDIDRILREIRSDGGADDDAAAAGDLAGSFNATALNATEAAAAYASAVERYALGPKISDWDGQRRRWLRQNPGFPSTVAGGKPRILLVTGSQPGPCDNPLGDHYLLKTTKNKIDYCRLHGIEIVHNLAHLDTELAGYWAKLPLLRRLMLSHPEVEWIWWMDSDALFTDMAFELPLSRYQDRNLIIHGYQDLLFEKHSWIALNTGSFLFRNCQWSLDLLDAWAPMGPKGFIRDEAGKILTANLKGRPAFEADDQSALIYLLLSQKEKWMNKVFIENSYYLHGFWAGLVDKYEEMMENHHPGLGDERWPFVTHFVGCKPCGSYGDYPVERCLRSMERAFNFADNQVLRLYGFAHKGLESPKIKRVRNQTTKPIDDKENLDVKAKISTTS.

Over residues Met1 to Leu21 the composition is skewed to gly residues. A disordered region spans residues Met1–Lys45. Residues Met1–Thr49 lie on the Cytoplasmic side of the membrane. A helical; Signal-anchor for type II membrane protein membrane pass occupies residues Phe50–Gly72. The Lumenal segment spans residues Leu73–Ser480. 4 N-linked (GlcNAc...) asparagine glycosylation sites follow: Asn74, Asn124, Asn129, and Asn458.

Belongs to the glycosyltransferase 34 family.

The protein resides in the golgi apparatus membrane. Probable glycosyltransferase that may be involved in the biosynthesis of xyloglucan. This Oryza sativa subsp. indica (Rice) protein is Probable glycosyltransferase 2.